We begin with the raw amino-acid sequence, 153 residues long: uncharacterized protein (153 aa).

The disordered stretch occupies residues 17 to 78 (IYIHTPHPHP…HTTLSNLSLN (62 aa)). The span at 22–38 (PHPHPHPHPHTPTHTHP) shows a compositional bias: basic residues.

This is an uncharacterized protein from Saccharomyces cerevisiae (strain ATCC 204508 / S288c) (Baker's yeast).